The sequence spans 617 residues: Proline--tRNA ligase (617 aa).

This sequence belongs to the class-II aminoacyl-tRNA synthetase family. ProS type 1 subfamily. Homodimer.

It is found in the cytoplasm. The enzyme catalyses tRNA(Pro) + L-proline + ATP = L-prolyl-tRNA(Pro) + AMP + diphosphate. Functionally, catalyzes the attachment of proline to tRNA(Pro) in a two-step reaction: proline is first activated by ATP to form Pro-AMP and then transferred to the acceptor end of tRNA(Pro). As ProRS can inadvertently accommodate and process non-cognate amino acids such as alanine and cysteine, to avoid such errors it has two additional distinct editing activities against alanine. One activity is designated as 'pretransfer' editing and involves the tRNA(Pro)-independent hydrolysis of activated Ala-AMP. The other activity is designated 'posttransfer' editing and involves deacylation of mischarged Ala-tRNA(Pro). The misacylated Cys-tRNA(Pro) is not edited by ProRS. The polypeptide is Proline--tRNA ligase (Streptococcus pneumoniae (strain ATCC BAA-255 / R6)).